Consider the following 57-residue polypeptide: Large ribosomal subunit protein bL32 (57 aa).

This sequence belongs to the bacterial ribosomal protein bL32 family.

The sequence is that of Large ribosomal subunit protein bL32 from Staphylococcus haemolyticus (strain JCSC1435).